We begin with the raw amino-acid sequence, 100 residues long: Osteocalcin (100 aa).

The N-terminal stretch at 1–23 (MRALTLLALLALAALCITGQAGA) is a signal peptide. The propeptide occupies 24 to 51 (KPSGADSSKGAAFVSKQEGSEVVKRPRR). The Gla domain occupies 52–98 (YLYQWLGAPVPYPDPLEPKREVCELNPDCDELADHIGFQEAYRRFYG). Residues Glu-68, Glu-72, Glu-75, and Asp-81 each contribute to the Ca(2+) site. 4-carboxyglutamate occurs at positions 68, 72, and 75. The cysteines at positions 74 and 80 are disulfide-linked.

The protein belongs to the osteocalcin/matrix Gla protein family. In terms of processing, gamma-carboxyglutamate residues are formed by vitamin K dependent carboxylation by GGCX. These residues are essential for the binding of calcium. Decarboxylation promotes the hormone activity.

The protein resides in the secreted. Its function is as follows. The carboxylated form is one of the main organic components of the bone matrix, which constitutes 1-2% of the total bone protein: it acts as a negative regulator of bone formation and is required to limit bone formation without impairing bone resorption or mineralization. The carboxylated form binds strongly to apatite and calcium. Functionally, the uncarboxylated form acts as a hormone secreted by osteoblasts, which regulates different cellular processes, such as energy metabolism, male fertility and brain development. Regulates of energy metabolism by acting as a hormone favoring pancreatic beta-cell proliferation, insulin secretion and sensitivity and energy expenditure. Uncarboxylated osteocalcin hormone also promotes testosterone production in the testes: acts as a ligand for G protein-coupled receptor GPRC6A at the surface of Leydig cells, initiating a signaling response that promotes the expression of enzymes required for testosterone synthesis in a CREB-dependent manner. Also acts as a regulator of brain development: osteocalcin hormone crosses the blood-brain barrier and acts as a ligand for GPR158 on neurons, initiating a signaling response that prevents neuronal apoptosis in the hippocampus, favors the synthesis of all monoamine neurotransmitters and inhibits that of gamma-aminobutyric acid (GABA). Osteocalcin also crosses the placenta during pregnancy and maternal osteocalcin is required for fetal brain development. The sequence is that of Osteocalcin from Pongo pygmaeus (Bornean orangutan).